The primary structure comprises 293 residues: Glycine--tRNA ligase alpha subunit (293 aa).

Belongs to the class-II aminoacyl-tRNA synthetase family. As to quaternary structure, tetramer of two alpha and two beta subunits.

Its subcellular location is the cytoplasm. It carries out the reaction tRNA(Gly) + glycine + ATP = glycyl-tRNA(Gly) + AMP + diphosphate. The protein is Glycine--tRNA ligase alpha subunit of Sulfurimonas denitrificans (strain ATCC 33889 / DSM 1251) (Thiomicrospira denitrificans (strain ATCC 33889 / DSM 1251)).